Consider the following 196-residue polypeptide: Ribosome maturation factor RimP (196 aa).

Residues Leu164–Glu196 are disordered. The segment covering Gly173–Lys182 has biased composition (basic residues).

The protein belongs to the RimP family.

The protein localises to the cytoplasm. Its function is as follows. Required for maturation of 30S ribosomal subunits. In Xanthomonas oryzae pv. oryzae (strain MAFF 311018), this protein is Ribosome maturation factor RimP.